We begin with the raw amino-acid sequence, 323 residues long: Mortality factor 4-like protein 1 (323 aa).

Residues 12–62 (QEGERVLCFHGPLLYEAKCVKVAIKDKQVKYFIHHSGWNKNWDEWVPESRV) enclose the Tudor-knot domain. Residues 76–143 (LQKANQEQYA…RKKRARVDPT (68 aa)) form a disordered region. The sufficient for interaction with SIN3A stretch occupies residues 94–227 (PGKKTSGLQQ…VAGIKEYFNV (134 aa)). Positions 96–107 (KKTSGLQQKNVD) match the Nuclear localization signal motif. Lys-104 carries the post-translational modification N6-acetyllysine. The segment at 125–191 (STSETPQPPR…FYLPAKKNVD (67 aa)) is interaction with RB1-1. A sufficient for interaction with PHF12 region spans residues 149-303 (TFMNRVEVKV…FLKYLAKNSA (155 aa)). The region spanning 152–323 (NRVEVKVKIP…APPEYHRKAV (172 aa)) is the MRG domain. Residues 284 to 305 (LALLLNYLHDFLKYLAKNSATL) are interaction with RB1-2.

Component of the NuA4 histone acetyltransferase complex which contains the catalytic subunit KAT5/TIP60 and the subunits EP400, TRRAP/PAF400, BRD8/SMAP, EPC1, DMAP1/DNMAP1, RUVBL1/TIP49, RUVBL2, ING3, actin, ACTL6A/BAF53A, MORF4L1/MRG15, MORF4L2/MRGX, MRGBP, YEATS4/GAS41, VPS72/YL1 and MEAF6. The NuA4 complex interacts with MYC and the adenovirus E1A protein. MORF4L1 may also participate in the formation of NuA4 related complexes which lack the KAT5/TIP60 catalytic subunit, but which include the SWI/SNF related protein SRCAP. Component of the mSin3A histone deacetylase complex, which includes SIN3A, HDAC2, ARID4B, MORF4L1, RBBP4/RbAp48, and RBBP7/RbAp46. May also interact with PHF12 and one or more as yet undefined members of the TLE (transducin-like enhancer of split) family of transcriptional repressors. Component of the SIN3B complex, which includes SIN3B, HDAC2 or HDAC1, PHF12 and MORF4L1. Interacts with RB1 and KAT8. Interacts with the N-terminus of MRFAP1. Found in a complex composed of MORF4L1, MRFAP1 and RB1. Interacts with the entire BRCA complex, which contains BRCA1, PALB2, BRCA2 and RAD51. Interacts with PALB2. Forms a complex with MSL1 and NUPR1.

The protein localises to the nucleus. Component of the NuA4 histone acetyltransferase (HAT) complex which is involved in transcriptional activation of select genes principally by acetylation of nucleosomal histones H4 and H2A. This modification may both alter nucleosome - DNA interactions and promote interaction of the modified histones with other proteins which positively regulate transcription. This complex may be required for the activation of transcriptional programs associated with oncogene and proto-oncogene mediated growth induction, tumor suppressor mediated growth arrest and replicative senescence, apoptosis, and DNA repair. The NuA4 complex ATPase and helicase activities seem to be, at least in part, contributed by the association of RUVBL1 and RUVBL2 with EP400. NuA4 may also play a direct role in DNA repair when directly recruited to sites of DNA damage. As part of the SIN3B complex represses transcription and counteracts the histone acetyltransferase activity of EP300 through the recognition H3K27ac marks by PHF12 and the activity of the histone deacetylase HDAC2. SIN3B complex is recruited downstream of the constitutively active genes transcriptional start sites through interaction with histones and mitigates histone acetylation and RNA polymerase II progression within transcribed regions contributing to the regulation of transcription. Required for homologous recombination repair (HRR) and resistance to mitomycin C (MMC). Involved in the localization of PALB2, BRCA2 and RAD51, but not BRCA1, to DNA-damage foci. This is Mortality factor 4-like protein 1 (MORF4L1) from Pongo abelii (Sumatran orangutan).